We begin with the raw amino-acid sequence, 349 residues long: MAFKIASSPHVTRNLHTSTVMQRVILCLLPGLVVQCAFFGWGTLIQVLLAIIVALSCEAAVMKLRNRSIKASLSDNSAMLTAILIGVAIPPLAPWWMIVMGTVFAIVIVKHLYGGLGHNLFNPAMAAYVLLLVSFPVQMTSWIAPSTVALNTPSVIDSLQLIFNVGAHGGMEQFRLGIDGISMATPLDTLKTDLSLGLTTTESMAKSIFDGGTGVGWFWVNLAYLAGGLVLLKLKAIRWHISTGVLAGLFVASSIGFLLSPDTQASPLFHLFSGATMLAAFFIATDPVTAATSPRGRLIFGALIGVLVYVIRTQGGYPDAFAFAVLLANLCAPFIDYYVRPRTYGHSAP.

The next 3 helical transmembrane spans lie at 36 to 56 (CAFF…VALS), 77 to 99 (SAML…WMIV), and 124 to 144 (AMAA…SWIA). Thr185 is subject to FMN phosphoryl threonine. The next 5 membrane-spanning stretches (helical) occupy residues 212–232 (GTGV…LVLL), 239–259 (WHIS…GFLL), 265–285 (ASPL…FIAT), 291–311 (ATSP…VYVI), and 315–335 (GGYP…APFI).

Belongs to the NqrB/RnfD family. The complex is composed of six subunits: RnfA, RnfB, RnfC, RnfD, RnfE and RnfG. FMN is required as a cofactor.

The protein localises to the cell inner membrane. In terms of biological role, part of a membrane-bound complex that couples electron transfer with translocation of ions across the membrane. This is Ion-translocating oxidoreductase complex subunit D from Shewanella sp. (strain MR-4).